Here is a 350-residue protein sequence, read N- to C-terminus: UDP-3-O-acylglucosamine N-acyltransferase (350 aa).

H244 (proton acceptor) is an active-site residue.

It belongs to the transferase hexapeptide repeat family. LpxD subfamily. As to quaternary structure, homotrimer.

It carries out the reaction a UDP-3-O-[(3R)-3-hydroxyacyl]-alpha-D-glucosamine + a (3R)-hydroxyacyl-[ACP] = a UDP-2-N,3-O-bis[(3R)-3-hydroxyacyl]-alpha-D-glucosamine + holo-[ACP] + H(+). It functions in the pathway bacterial outer membrane biogenesis; LPS lipid A biosynthesis. Its function is as follows. Catalyzes the N-acylation of UDP-3-O-acylglucosamine using 3-hydroxyacyl-ACP as the acyl donor. Is involved in the biosynthesis of lipid A, a phosphorylated glycolipid that anchors the lipopolysaccharide to the outer membrane of the cell. The chain is UDP-3-O-acylglucosamine N-acyltransferase from Janthinobacterium sp. (strain Marseille) (Minibacterium massiliensis).